The following is a 120-amino-acid chain: Seripauperin-6 (120 aa).

The signal sequence occupies residues 1 to 20 (MVKLTSIAAGVAAIAATASA).

It belongs to the SRP1/TIP1 family. Seripauperin subfamily.

The sequence is that of Seripauperin-6 (PAU6) from Saccharomyces cerevisiae (strain ATCC 204508 / S288c) (Baker's yeast).